Consider the following 271-residue polypeptide: Shikimate dehydrogenase (NADP(+)) (271 aa).

Shikimate contacts are provided by residues 14 to 16 (SLS) and Thr61. The active-site Proton acceptor is the Lys65. Residues Asn86 and Asp101 each contribute to the shikimate site. Residues 125–129 (GAGGA) and Ile212 each bind NADP(+). Tyr214 contacts shikimate. NADP(+) is bound at residue Gly235.

This sequence belongs to the shikimate dehydrogenase family. In terms of assembly, homodimer.

It catalyses the reaction shikimate + NADP(+) = 3-dehydroshikimate + NADPH + H(+). The protein operates within metabolic intermediate biosynthesis; chorismate biosynthesis; chorismate from D-erythrose 4-phosphate and phosphoenolpyruvate: step 4/7. Its function is as follows. Involved in the biosynthesis of the chorismate, which leads to the biosynthesis of aromatic amino acids. Catalyzes the reversible NADPH linked reduction of 3-dehydroshikimate (DHSA) to yield shikimate (SA). In Clostridium perfringens (strain SM101 / Type A), this protein is Shikimate dehydrogenase (NADP(+)).